Consider the following 337-residue polypeptide: MTVKVGINGFGRIGRIVFRNAVEHPDVEIVAVNDPFIEPKYAEYMLKYDSTHGVFKGTIQVSGSDLIVNGKTVKFYTERDPSAIPWKDTGAEYIVESTGVFTTTEKASAHLKGGAKRVIISAPSADAPMYVMGVNEKTYDGKAAVISNASCTTNCLAPLAKVVNDKFGIVEGLMTTVHSYTATQKTVDGPSAKDWRGGRGAAQNIIPSSTGAAKAVGKVIPELNGKLTGMAFRVPTSNVSVVDLTCRLEKPASYETIKAALKEASEGELKGILGYTEDEIVSSDLNGNANSSIFDAKAGISLNDNFVKLVSWYDNEWGYSRRVLDLLSYVAKYDASH.

Residues 12–13 (RI), Asp-34, and Arg-79 contribute to the NAD(+) site. Residues 150-152 (SCT), Thr-181, 210-211 (TG), and Arg-233 each bind D-glyceraldehyde 3-phosphate. Cys-151 acts as the Nucleophile in catalysis. An NAD(+)-binding site is contributed by Asn-315.

Belongs to the glyceraldehyde-3-phosphate dehydrogenase family. Homotetramer.

It is found in the cytoplasm. It carries out the reaction D-glyceraldehyde 3-phosphate + phosphate + NAD(+) = (2R)-3-phospho-glyceroyl phosphate + NADH + H(+). It participates in carbohydrate degradation; glycolysis; pyruvate from D-glyceraldehyde 3-phosphate: step 1/5. This chain is Glyceraldehyde-3-phosphate dehydrogenase (GPD), found in Podospora anserina (Pleurage anserina).